A 78-amino-acid polypeptide reads, in one-letter code: Large ribosomal subunit protein bL28 (78 aa).

Positions 1–21 (MSRVCQVTGKRPMSGNNRSHA) are disordered.

This sequence belongs to the bacterial ribosomal protein bL28 family.

The sequence is that of Large ribosomal subunit protein bL28 from Photorhabdus laumondii subsp. laumondii (strain DSM 15139 / CIP 105565 / TT01) (Photorhabdus luminescens subsp. laumondii).